The chain runs to 151 residues: Deoxyuridine 5'-triphosphate nucleotidohydrolase (151 aa).

Substrate contacts are provided by residues 70–72 (RSG), asparagine 83, 87–89 (LID), and methionine 97.

It belongs to the dUTPase family. It depends on Mg(2+) as a cofactor.

It carries out the reaction dUTP + H2O = dUMP + diphosphate + H(+). It participates in pyrimidine metabolism; dUMP biosynthesis; dUMP from dCTP (dUTP route): step 2/2. Functionally, this enzyme is involved in nucleotide metabolism: it produces dUMP, the immediate precursor of thymidine nucleotides and it decreases the intracellular concentration of dUTP so that uracil cannot be incorporated into DNA. This is Deoxyuridine 5'-triphosphate nucleotidohydrolase from Shigella flexneri serotype 5b (strain 8401).